A 687-amino-acid polypeptide reads, in one-letter code: DNA ligase (687 aa).

NAD(+) contacts are provided by residues 34–38 (DAEYD), 83–84 (SL), and E117. K119 (N6-AMP-lysine intermediate) is an active-site residue. NAD(+) is bound by residues R140, E182, K298, and K322. Residues C416, C419, C434, and C439 each contribute to the Zn(2+) site. Residues 609 to 687 (EARGPFAGKT…EEEFVRLLKE (79 aa)) enclose the BRCT domain.

Belongs to the NAD-dependent DNA ligase family. LigA subfamily. Mg(2+) serves as cofactor. Requires Mn(2+) as cofactor.

The enzyme catalyses NAD(+) + (deoxyribonucleotide)n-3'-hydroxyl + 5'-phospho-(deoxyribonucleotide)m = (deoxyribonucleotide)n+m + AMP + beta-nicotinamide D-nucleotide.. Functionally, DNA ligase that catalyzes the formation of phosphodiester linkages between 5'-phosphoryl and 3'-hydroxyl groups in double-stranded DNA using NAD as a coenzyme and as the energy source for the reaction. It is essential for DNA replication and repair of damaged DNA. This Anaeromyxobacter dehalogenans (strain 2CP-1 / ATCC BAA-258) protein is DNA ligase.